Here is a 1523-residue protein sequence, read N- to C-terminus: TALPID3 protein (1523 aa).

The segment covering 1 to 16 (MEAESGSSTSQDSLAS) has biased composition (polar residues). Disordered stretches follow at residues 1–20 (MEAE…LTAG) and 57–84 (SRQA…ASNG). Coiled-coil stretches lie at residues 428–466 (IEKT…MNDL) and 499–528 (ILSD…LRAK). The interval 498–585 (SILSDAKRVL…MEQVKYDQKV (88 aa)) is required for centrosomal localization. 5 disordered regions span residues 1070 to 1112 (EPLV…LSGD), 1137 to 1262 (VITP…SEGE), 1294 to 1313 (ANEM…RSHK), 1373 to 1410 (DIDH…DADT), and 1498 to 1523 (SMNI…ADTF). Over residues 1073–1088 (VPTPLPTPQATPPQTP) the composition is skewed to pro residues. Over residues 1099–1108 (TPESSPSITE) the composition is skewed to polar residues. Composition is skewed to low complexity over residues 1137 to 1149 (VITP…EIIT) and 1236 to 1251 (SSEQ…PTET). The span at 1373 to 1386 (DIDHATARASEDRP) shows a compositional bias: basic and acidic residues. A compositionally biased stretch (low complexity) spans 1507-1523 (SLSSIHGDSDSSGADTF).

This sequence belongs to the TALPID3 family. In terms of tissue distribution, ubiquitously expressed.

Its subcellular location is the cytoplasm. It is found in the cytoskeleton. The protein localises to the microtubule organizing center. It localises to the centrosome. In terms of biological role, required for ciliogenesis and sonic hedgehog/SHH signaling. Independently, involved in regulation of cell intracellular organization. Involved in regulation of cell polarity. The sequence is that of TALPID3 protein (TALPID3) from Gallus gallus (Chicken).